Here is a 287-residue protein sequence, read N- to C-terminus: Shikimate dehydrogenase (NADP(+)) (287 aa).

Residues 20-22 (SRS) and T67 contribute to the shikimate site. Catalysis depends on K71, which acts as the Proton acceptor. Residue E84 participates in NADP(+) binding. Shikimate-binding residues include N93 and D108. NADP(+)-binding positions include 132-136 (GAGGA), 156-161 (NRTAAR), and M226. Residue Y228 participates in shikimate binding. G250 provides a ligand contact to NADP(+).

Belongs to the shikimate dehydrogenase family. As to quaternary structure, homodimer.

It catalyses the reaction shikimate + NADP(+) = 3-dehydroshikimate + NADPH + H(+). The protein operates within metabolic intermediate biosynthesis; chorismate biosynthesis; chorismate from D-erythrose 4-phosphate and phosphoenolpyruvate: step 4/7. In terms of biological role, involved in the biosynthesis of the chorismate, which leads to the biosynthesis of aromatic amino acids. Catalyzes the reversible NADPH linked reduction of 3-dehydroshikimate (DHSA) to yield shikimate (SA). This Bordetella parapertussis (strain 12822 / ATCC BAA-587 / NCTC 13253) protein is Shikimate dehydrogenase (NADP(+)).